A 311-amino-acid polypeptide reads, in one-letter code: HPr kinase/phosphorylase (311 aa).

Residues His-138 and Lys-159 contribute to the active site. 153-160 (GDSGIGKS) is a binding site for ATP. Ser-160 contributes to the Mg(2+) binding site. The active-site Proton acceptor; for phosphorylation activity. Proton donor; for dephosphorylation activity is the Asp-177. The tract at residues 201–210 (LEIRGVGIID) is important for the catalytic mechanism of both phosphorylation and dephosphorylation. Glu-202 is a binding site for Mg(2+). Residue Arg-243 is part of the active site. The tract at residues 264–269 (PVKTGR) is important for the catalytic mechanism of dephosphorylation.

The protein belongs to the HPrK/P family. Homohexamer. Mg(2+) serves as cofactor.

It catalyses the reaction [HPr protein]-L-serine + ATP = [HPr protein]-O-phospho-L-serine + ADP + H(+). The catalysed reaction is [HPr protein]-O-phospho-L-serine + phosphate + H(+) = [HPr protein]-L-serine + diphosphate. Functionally, catalyzes the ATP- as well as the pyrophosphate-dependent phosphorylation of a specific serine residue in HPr, a phosphocarrier protein of the phosphoenolpyruvate-dependent sugar phosphotransferase system (PTS). HprK/P also catalyzes the pyrophosphate-producing, inorganic phosphate-dependent dephosphorylation (phosphorolysis) of seryl-phosphorylated HPr (P-Ser-HPr). The two antagonistic activities of HprK/P are regulated by several intracellular metabolites, which change their concentration in response to the absence or presence of rapidly metabolisable carbon sources (glucose, fructose, etc.) in the growth medium. Therefore, by controlling the phosphorylation state of HPr, HPrK/P is a sensor enzyme that plays a major role in the regulation of carbon metabolism and sugar transport: it mediates carbon catabolite repression (CCR), and regulates PTS-catalyzed carbohydrate uptake and inducer exclusion. This Streptococcus sanguinis (strain SK36) protein is HPr kinase/phosphorylase.